The primary structure comprises 95 residues: Protein IDA-LIKE 2 (95 aa).

The first 35 residues, 1 to 35 (MSSRNQRSRITSSFFVSFFTRTILLLLILLLGFCN), serve as a signal peptide directing secretion. The segment at 75-95 (ASGPSRKHNDIGLLSWHRSSP) is disordered.

In terms of tissue distribution, expressed in leaves, buds, flowers, seedlings and seeds. Detected at the base of pedicel, in the floral and funicule abscission zones and in vascular tissues.

The protein resides in the secreted. It localises to the extracellular space. May be involved in floral abscission. This Arabidopsis thaliana (Mouse-ear cress) protein is Protein IDA-LIKE 2 (IDL2).